Here is a 585-residue protein sequence, read N- to C-terminus: Amyloid protein-binding protein 2 (585 aa).

8 TPR repeats span residues 50 to 83 (QGRL…HHCF), 120 to 153 (IQVG…CTLH), 206 to 239 (AALY…ITSG), 288 to 321 (SDTL…RQSV), 333 to 367 (HEDL…ITHI), 429 to 462 (AKHY…KEQL), 471 to 505 (ALSV…GKKL), and 514 to 547 (EYDY…NRLR).

As to quaternary structure, component of a CRL2 E3 ubiquitin-protein ligase complex, also named ECS (Elongin BC-CUL2/5-SOCS-box protein) complex, composed of CUL2, Elongin BC (ELOB and ELOC), RBX1 and substrate-specific adapter APPBP2. Interacts with APP; APP interaction inhibits the E3 ubiquitin-protein ligase activity of the CRL2(APPBP2) complex. Post-translationally, rapidly degraded by the proteasome upon overexpression of a C-terminal fragment of APP.

It is found in the nucleus. Its subcellular location is the cytoplasm. The protein localises to the cytoskeleton. It localises to the membrane. The protein operates within protein modification; protein ubiquitination. With respect to regulation, E3 ubiquitin-protein ligase activity of the CRL2(APPBP2) complex is inhibited by APP. Its function is as follows. Substrate-recognition component of a Cul2-RING (CRL2) E3 ubiquitin-protein ligase complex of the DesCEND (destruction via C-end degrons) pathway, which recognizes a C-degron located at the extreme C terminus of target proteins, leading to their ubiquitination and degradation. The C-degron recognized by the DesCEND pathway is usually a motif of less than ten residues and can be present in full-length proteins, truncated proteins or proteolytically cleaved forms. The CRL2(APPBP2) complex specifically recognizes proteins with a -Arg-Xaa-Xaa-Gly degron at the C-terminus, leading to their ubiquitination and degradation. The CRL2(APPBP2) complex mediates ubiquitination and degradation of truncated SELENOV selenoproteins produced by failed UGA/Sec decoding, which end with a -Arg-Xaa-Xaa-Gly degron. May play a role in intracellular protein transport: may be involved in the translocation of APP along microtubules toward the cell surface. The sequence is that of Amyloid protein-binding protein 2 from Rattus norvegicus (Rat).